A 229-amino-acid chain; its full sequence is 2,3-bisphosphoglycerate-dependent phosphoglycerate mutase (229 aa).

Residues 7 to 14 (RHGQSEWN), 20 to 21 (TG), Arg59, 86 to 89 (ERHY), Lys97, 113 to 114 (RR), and 182 to 183 (GN) each bind substrate. The active-site Tele-phosphohistidine intermediate is the His8. The active-site Proton donor/acceptor is Glu86.

Belongs to the phosphoglycerate mutase family. BPG-dependent PGAM subfamily.

The enzyme catalyses (2R)-2-phosphoglycerate = (2R)-3-phosphoglycerate. Its pathway is carbohydrate degradation; glycolysis; pyruvate from D-glyceraldehyde 3-phosphate: step 3/5. In terms of biological role, catalyzes the interconversion of 2-phosphoglycerate and 3-phosphoglycerate. The polypeptide is 2,3-bisphosphoglycerate-dependent phosphoglycerate mutase (Listeria innocua serovar 6a (strain ATCC BAA-680 / CLIP 11262)).